Reading from the N-terminus, the 359-residue chain is Outer membrane protein P5 (359 aa).

Positions 1 to 21 (MKKTAIALVVAGLAAASVAQA) are cleaved as a signal peptide. Beta stranded transmembrane passes span 27-37 (TFYAGVKAGQG), 64-75 (TFTYGVFGGYQI), 83-91 (LAAELGYDD), 110-121 (HGAYLSLKGSYE), 126-134 (LDVYGKAGV), 164-173 (GLFAVGAEYA), 178-185 (LAVRLEYQ), and 211-219 (CINAGISYR). Residues 233-359 (MVSKTFSLNS…RVEIAVNGTK (127 aa)) enclose the OmpA-like domain. The cysteines at positions 332 and 344 are disulfide-linked.

The protein belongs to the outer membrane OOP (TC 1.B.6) superfamily. OmpA family. In terms of assembly, monomer and homodimer.

It is found in the cell outer membrane. The protein resides in the fimbrium. Functionally, acts as a fimbriae subunit, allowing adhesion to host cells. In terms of biological role, with TolR probably plays a role in maintaining the position of the peptidoglycan cell wall in the periplasm. Acts as a porin with low permeability that allows slow penetration of small solutes; an internal gate slows down solute passage. This Haemophilus influenzae protein is Outer membrane protein P5.